A 1501-amino-acid chain; its full sequence is Inactive protein tyrosine kinase pTKL (1501 aa).

Residues N64, N128, and N133 are each glycosylated (N-linked (GlcNAc...) asparagine). A compositionally biased stretch (basic residues) spans 204 to 221; the sequence is KKNKKNKKNKKKKNKKTK. Residues 204 to 223 form a disordered region; the sequence is KKNKKNKKNKKKKNKKTKNT. N-linked (GlcNAc...) asparagine glycans are attached at residues N239, N242, N258, and N327. Basic and acidic residues predominate over residues 257 to 273; sequence MNISLHEKNDKKNEKKN. Positions 257-276 are disordered; sequence MNISLHEKNDKKNEKKNEKK. One can recognise an SAM domain in the interval 301 to 366; that stretch reads WSLREVIQWL…LQLIKNLQVM (66 aa). Residues 392 to 425 form a disordered region; sequence NKNIKKGKNIKKEKKKKKEKNIKKEKKKKKKETK. The segment covering 394 to 424 has biased composition (basic residues); the sequence is NIKKGKNIKKEKKKKKEKNIKKEKKKKKKET. Residues 399 to 433 adopt a coiled-coil conformation; that stretch reads KNIKKEKKKKKEKNIKKEKKKKKKETKKFNNMDKK. N448, N463, and N471 each carry an N-linked (GlcNAc...) asparagine glycan. The short motif at 483 to 486 is the RVxF motif 1 element; it reads KVSF. N-linked (GlcNAc...) asparagine glycosylation is present at N506. The span at 543-597 shows a compositional bias: low complexity; it reads QLSSPLSSPLSSPSPSSSPSSSPSSSPSSSPSSSPSPSSSPSPSSSPSSSPSSSP. The interval 543–607 is disordered; the sequence is QLSSPLSSPL…SSPPSPLSYK (65 aa). The N-linked (GlcNAc...) asparagine glycan is linked to N652. Residues 659-678 are disordered; it reads IKKSKSKYNNDKKEQKKLPL. The span at 666–675 shows a compositional bias: basic and acidic residues; that stretch reads YNNDKKEQKK. Residues N681, N712, N737, N811, and N819 are each glycosylated (N-linked (GlcNAc...) asparagine). Residues 836 to 844 and K864 each bind ATP; that span reads QNINNFGKY. N-linked (GlcNAc...) asparagine glycosylation is found at N1024, N1031, N1074, and N1157. In terms of domain architecture, Protein kinase spans 1088–1483; sequence FHYQHNVLCG…HILKTISTLY (396 aa). An RVxF motif 2 motif is present at residues 1238–1241; the sequence is KVLF. A glycan (N-linked (GlcNAc...) asparagine) is linked at N1382.

It belongs to the protein kinase superfamily. TKL Ser/Thr protein kinase family. In terms of assembly, interacts (via RVxF motif 1 and/or 2) with phosphatase PP1C. May interact (via SAM domain) with SERA5 (via C-terminus).

The protein localises to the parasitophorous vacuole. It localises to the host cell membrane. The protein resides in the host cytoplasm. It is found in the host cytoskeleton. This is Inactive protein tyrosine kinase pTKL from Plasmodium falciparum (isolate 3D7).